Reading from the N-terminus, the 316-residue chain is DnaJ homolog subfamily B member 13 (316 aa).

The region spanning 4-68 is the J domain; it reads DYYSVLGITR…MKRGIYDKFG (65 aa).

Homodimer. Component of the axonemal radial spoke complex 1 (RS1), at least composed of spoke head proteins RSPH1, RSPH3, RSPH9 and the cilia-specific component RSPH4A or sperm-specific component RSPH6A, spoke stalk proteins RSPH14, DNAJB13, DYDC1, ROPN1L and NME5, and the anchor protein IQUB. Interacts with SUN5. Interacts with IQUB. As to expression, specifically expressed in testis and trachea.

It is found in the cell projection. The protein resides in the cilium. It localises to the flagellum. Its function is as follows. Functions as part of axonemal radial spoke complexes that play an important part in the motility of sperm and cilia. The protein is DnaJ homolog subfamily B member 13 (DNAJB13) of Homo sapiens (Human).